Reading from the N-terminus, the 1975-residue chain is Golgi-specific brefeldin A-resistance guanine nucleotide exchange factor 1 homolog (1975 aa).

Disordered regions lie at residues asparagine 216–asparagine 243 and isoleucine 299–methionine 352. The segment covering arginine 221 to leucine 230 has biased composition (basic residues). An SEC7 domain is found at glutamine 624–glutamate 812. A compositionally biased stretch (polar residues) spans glutamine 1264 to methionine 1277. 5 disordered regions span residues glutamine 1264–serine 1318, aspartate 1447–aspartate 1473, isoleucine 1699–glutamine 1751, valine 1788–tyrosine 1854, and tyrosine 1877–proline 1975. Positions glycine 1291–glycine 1309 are enriched in basic and acidic residues. A compositionally biased stretch (basic residues) spans valine 1451–lysine 1464. Over residues serine 1734–glutamine 1751 the composition is skewed to low complexity. The span at glycine 1797 to serine 1808 shows a compositional bias: pro residues. Low complexity-rich tracts occupy residues tyrosine 1820–tyrosine 1854 and tyrosine 1877–histidine 1894. Positions proline 1895–valine 1909 are enriched in polar residues. Residues threonine 1938–alanine 1957 show a composition bias toward low complexity.

It is found in the golgi apparatus. It localises to the cis-Golgi network. Its subcellular location is the endoplasmic reticulum-Golgi intermediate compartment. In terms of biological role, guanine-nucleotide exchange factor (GEF) for members of the Arf family of small GTPases involved in trafficking in the early secretory pathway; its GEF activity initiates the coating of nascent vesicles via the localized generation of activated ARFs through replacement of GDP with GTP. Also, plays a role in receptor-mediated endocytosis in oocytes and endosomal trafficking. Involved in vesicle retrograde transport from the ERGIC and cis-Golgi compartments to the endoplasmic reticulum (ER). Plays a role in maintaining mitochondrial morphology, network organization and function. May be required for the basolateral cell membrane localization of the serine threonine protein kinase sgk-1 in intestinal cells. The sequence is that of Golgi-specific brefeldin A-resistance guanine nucleotide exchange factor 1 homolog from Caenorhabditis elegans.